The following is a 96-amino-acid chain: Large ribosomal subunit protein bL28 (96 aa).

Belongs to the bacterial ribosomal protein bL28 family.

This chain is Large ribosomal subunit protein bL28, found in Parvibaculum lavamentivorans (strain DS-1 / DSM 13023 / NCIMB 13966).